Consider the following 335-residue polypeptide: MKKWFVCLLGLVALTVQAADSRPAFSRIVMFGDSLSDTGKMYSKMRGYLPSSPPYYEGRFSNGPVWLEQLTNEFPGLTIANEAEGGPTAVAYNKISWNPKYQVINNLDYEVTQFLQKDSFKPDDLVILWVGANDYLAYGWNTEQDAKRVRDAISDAANRMVLNGAKEILLFNLPDLGQNPSARSQKVVEAASHVSAYHNQLLLNLARQLAPTGMVKLFEIDKQFAEMLRDPQNFGLSDTENACYGGSYVWKPFASRSASTDSQLSAFNPQERLAIAGNPLLAQAVASPMAARSASTLNCEGKMFWDQVHPTTVVHAALSEPAATFIESQYEFLAH.

The N-terminal stretch at 1–18 (MKKWFVCLLGLVALTVQA) is a signal peptide. The Nucleophile role is filled by serine 34. Residues aspartate 306 and histidine 309 contribute to the active site.

The protein belongs to the 'GDSL' lipolytic enzyme family.

It carries out the reaction a sterol + a 1,2-diacyl-sn-glycero-3-phosphocholine = a sterol ester + a 1-acyl-sn-glycero-3-phosphocholine. Functionally, fatty acid transfer between phosphatidylcholine and cholesterol. The sequence is that of Phosphatidylcholine-sterol acyltransferase from Aeromonas hydrophila.